We begin with the raw amino-acid sequence, 451 residues long: Aspartate aminotransferase, mitochondrial (451 aa).

3 residues coordinate L-aspartate: glycine 52, tryptophan 155, and asparagine 216. Lysine 286 is subject to N6-(pyridoxal phosphate)lysine. Arginine 423 lines the L-aspartate pocket.

Belongs to the class-I pyridoxal-phosphate-dependent aminotransferase family. In terms of assembly, homodimer. Requires pyridoxal 5'-phosphate as cofactor.

It localises to the mitochondrion matrix. It carries out the reaction L-aspartate + 2-oxoglutarate = oxaloacetate + L-glutamate. Functionally, plays a key role in amino acid metabolism. Important for metabolite exchange between mitochondria and cytosol. This Saccharomyces cerevisiae (strain ATCC 204508 / S288c) (Baker's yeast) protein is Aspartate aminotransferase, mitochondrial (AAT1).